A 559-amino-acid chain; its full sequence is 2-isopropylmalate synthase (559 aa).

Residues 30–304 (PLWAAVDLRD…DPGIDFSRMK (275 aa)) enclose the Pyruvate carboxyltransferase domain. 4 residues coordinate Mg(2+): D39, H243, H245, and N279. The tract at residues 436 to 559 (VPMGWVLRSY…ETSEQLIANS (124 aa)) is regulatory domain.

The protein belongs to the alpha-IPM synthase/homocitrate synthase family. LeuA type 2 subfamily. As to quaternary structure, homodimer. The cofactor is Mg(2+).

It localises to the cytoplasm. The catalysed reaction is 3-methyl-2-oxobutanoate + acetyl-CoA + H2O = (2S)-2-isopropylmalate + CoA + H(+). Its pathway is amino-acid biosynthesis; L-leucine biosynthesis; L-leucine from 3-methyl-2-oxobutanoate: step 1/4. Catalyzes the condensation of the acetyl group of acetyl-CoA with 3-methyl-2-oxobutanoate (2-ketoisovalerate) to form 3-carboxy-3-hydroxy-4-methylpentanoate (2-isopropylmalate). In Alcanivorax borkumensis (strain ATCC 700651 / DSM 11573 / NCIMB 13689 / SK2), this protein is 2-isopropylmalate synthase.